The chain runs to 198 residues: MEHYISLFVKSVFIENMALSFFLGMCTFLAVSKKVSTAFGLGVAVTVVLGISVPVNQLVYSLILKDGALIDGVDLSFLNFITFIGVIAALVQILEMILDKYFPALYNALGIFLPLITVNCAIFGGVSFMVQRDYNFAESVVYGIGAGTGWMLAIVALAGITEKMKYADVPAGLRGLGITFITVGLMALGFMSFSGVQL.

A run of 6 helical transmembrane segments spans residues 11 to 31, 35 to 55, 77 to 97, 110 to 130, 140 to 160, and 176 to 196; these read SVFI…FLAV, VSTA…SVPV, FLNF…LEMI, GIFL…SFMV, VVYG…LAGI, and LGIT…FSGV.

It belongs to the NqrDE/RnfAE family. In terms of assembly, composed of six subunits; NqrA, NqrB, NqrC, NqrD, NqrE and NqrF.

Its subcellular location is the cell inner membrane. The catalysed reaction is a ubiquinone + n Na(+)(in) + NADH + H(+) = a ubiquinol + n Na(+)(out) + NAD(+). NQR complex catalyzes the reduction of ubiquinone-1 to ubiquinol by two successive reactions, coupled with the transport of Na(+) ions from the cytoplasm to the periplasm. NqrA to NqrE are probably involved in the second step, the conversion of ubisemiquinone to ubiquinol. The chain is Na(+)-translocating NADH-quinone reductase subunit E from Histophilus somni (strain 129Pt) (Haemophilus somnus).